A 205-amino-acid chain; its full sequence is MQMTLVPYVVEDTGRGERAMDIYSRLLKDRIVMIGQEITEPLANTVIAQLLFLMSEDPKKDIKVFINSPGGYITAGLAIYDTIRFLGCDVNTYCIGQAASMGALLLSAGTKGKRYALPHSRMMIHQPSGGIIGTSADIQLQAAEILTLKKHLANILSECTGQPVEKIIEDSERDFFMGAEDAISYGLIDKVVSSAKDTKDKDTIS.

Catalysis depends on S100, which acts as the Nucleophile. H125 is an active-site residue.

Belongs to the peptidase S14 family. In terms of assembly, fourteen ClpP subunits assemble into 2 heptameric rings which stack back to back to give a disk-like structure with a central cavity, resembling the structure of eukaryotic proteasomes.

The protein resides in the cytoplasm. The catalysed reaction is Hydrolysis of proteins to small peptides in the presence of ATP and magnesium. alpha-casein is the usual test substrate. In the absence of ATP, only oligopeptides shorter than five residues are hydrolyzed (such as succinyl-Leu-Tyr-|-NHMec, and Leu-Tyr-Leu-|-Tyr-Trp, in which cleavage of the -Tyr-|-Leu- and -Tyr-|-Trp bonds also occurs).. Its function is as follows. Cleaves peptides in various proteins in a process that requires ATP hydrolysis. Has a chymotrypsin-like activity. Plays a major role in the degradation of misfolded proteins. This Chlamydia abortus (strain DSM 27085 / S26/3) (Chlamydophila abortus) protein is ATP-dependent Clp protease proteolytic subunit 2.